The following is a 673-amino-acid chain: Acetoacetyl-CoA synthetase (673 aa).

Belongs to the ATP-dependent AMP-binding enzyme family.

Its subcellular location is the cytoplasm. The protein resides in the cytosol. It catalyses the reaction acetoacetate + ATP + CoA = acetoacetyl-CoA + AMP + diphosphate. Functionally, converts acetoacetate to acetoacetyl-CoA in the cytosol. Ketone body-utilizing enzyme, responsible for the synthesis of cholesterol and fatty acids. The sequence is that of Acetoacetyl-CoA synthetase (aacs) from Danio rerio (Zebrafish).